The sequence spans 594 residues: Glutamate decarboxylase 1 (594 aa).

Residues 1–13 show a composition bias toward low complexity; sequence MASSTPSSSATSS. Positions 1-23 are disordered; sequence MASSTPSSSATSSNAGADPNTTN. At Ser78 the chain carries Phosphoserine. Residue 190 to 192 coordinates 4-aminobutanoate; the sequence is QLS. The residue at position 405 (Lys405) is an N6-(pyridoxal phosphate)lysine. Position 567 (Arg567) interacts with 4-aminobutanoate.

This sequence belongs to the group II decarboxylase family. Homodimer. It depends on pyridoxal 5'-phosphate as a cofactor.

It carries out the reaction L-glutamate + H(+) = 4-aminobutanoate + CO2. Its function is as follows. Catalyzes the synthesis of the inhibitory neurotransmitter gamma-aminobutyric acid (GABA) with pyridoxal 5'-phosphate as cofactor. The chain is Glutamate decarboxylase 1 (GAD1) from Pan troglodytes (Chimpanzee).